The following is a 151-amino-acid chain: MATKPDSRISWLQLLQRGQHYMKTWPAEKQLAPVFPENRVARATRFGIRIMPPLAVFTLTWQIALGGQLGPAIATALFACSLPLQGLWWLGRRSVTPLPPTLAQWFHEIRHKLLESGQALAPLEEAPTYQSLADVLKRAFSQLDKTFLDDL.

A run of 2 helical transmembrane segments spans residues phenylalanine 46–glycine 66 and leucine 69–tryptophan 89.

Belongs to the UPF0208 family.

The protein resides in the cell inner membrane. This chain is UPF0208 membrane protein PC1_2779, found in Pectobacterium carotovorum subsp. carotovorum (strain PC1).